The primary structure comprises 804 residues: Phenylalanine--tRNA ligase beta subunit (804 aa).

In terms of domain architecture, tRNA-binding spans 38-148 (RAAFRAFTIA…ENAPVGTSFA (111 aa)). Residues 401–476 (HTARVIDFPV…RIHGINRIDP (76 aa)) form the B5 domain. Asp454, Asp460, Glu463, and Glu464 together coordinate Mg(2+). An FDX-ACB domain is found at 710-803 (SLFQSLKRDY…VAKQTGGVLR (94 aa)).

It belongs to the phenylalanyl-tRNA synthetase beta subunit family. Type 1 subfamily. As to quaternary structure, tetramer of two alpha and two beta subunits. Requires Mg(2+) as cofactor.

The protein localises to the cytoplasm. The catalysed reaction is tRNA(Phe) + L-phenylalanine + ATP = L-phenylalanyl-tRNA(Phe) + AMP + diphosphate + H(+). This chain is Phenylalanine--tRNA ligase beta subunit, found in Brucella melitensis biotype 1 (strain ATCC 23456 / CCUG 17765 / NCTC 10094 / 16M).